A 281-amino-acid polypeptide reads, in one-letter code: CCAAT/enhancer-binding protein epsilon (281 aa).

Residues methionine 1–leucine 30 form a disordered region. A Glycyl lysine isopeptide (Lys-Gly) (interchain with G-Cter in SUMO2) cross-link involves residue lysine 121. A Phosphoserine modification is found at serine 181. The 64-residue stretch at serine 204–isoleucine 267 folds into the bZIP domain. Residues arginine 208–arginine 228 are basic motif. Residues leucine 230–leucine 237 are leucine-zipper.

The protein belongs to the bZIP family. C/EBP subfamily. Binds DNA as a homodimer and as a heterodimer. Can form stable heterodimers with CEBPA, CEBPB and CEBPD. Interacts with GATA1 and SPI1. Interacts with SMARCD2. In terms of processing, phosphorylated.

It localises to the nucleus. Its function is as follows. Transcriptional activator. C/EBP are DNA-binding proteins that recognize two different motifs: the CCAAT homology common to many promoters and the enhanced core homology common to many enhancers. Required for the promyelocyte-myelocyte transition in myeloid differentiation. The polypeptide is CCAAT/enhancer-binding protein epsilon (CEBPE) (Ovis aries (Sheep)).